A 118-amino-acid chain; its full sequence is Large ribosomal subunit protein uL18 (118 aa).

Residues 1 to 25 (MITKPDKNKVRQKRHRRVRGKLSGT) form a disordered region. Residues 10–20 (VRQKRHRRVRG) are compositionally biased toward basic residues.

This sequence belongs to the universal ribosomal protein uL18 family. As to quaternary structure, part of the 50S ribosomal subunit; part of the 5S rRNA/L5/L18/L25 subcomplex. Contacts the 5S and 23S rRNAs.

Functionally, this is one of the proteins that bind and probably mediate the attachment of the 5S RNA into the large ribosomal subunit, where it forms part of the central protuberance. The protein is Large ribosomal subunit protein uL18 of Streptococcus gordonii (strain Challis / ATCC 35105 / BCRC 15272 / CH1 / DL1 / V288).